Consider the following 358-residue polypeptide: 3-dehydroquinate synthase (358 aa).

NAD(+)-binding positions include 70–75 (DGEQFK), 104–108 (GVIGD), 128–129 (TT), Lys141, Lys150, and 168–171 (CLHT). The Zn(2+) site is built by Glu183, His246, and His263.

Belongs to the sugar phosphate cyclases superfamily. Dehydroquinate synthase family. It depends on Co(2+) as a cofactor. The cofactor is Zn(2+). NAD(+) serves as cofactor.

Its subcellular location is the cytoplasm. It carries out the reaction 7-phospho-2-dehydro-3-deoxy-D-arabino-heptonate = 3-dehydroquinate + phosphate. It participates in metabolic intermediate biosynthesis; chorismate biosynthesis; chorismate from D-erythrose 4-phosphate and phosphoenolpyruvate: step 2/7. Functionally, catalyzes the conversion of 3-deoxy-D-arabino-heptulosonate 7-phosphate (DAHP) to dehydroquinate (DHQ). The sequence is that of 3-dehydroquinate synthase from Shewanella baltica (strain OS155 / ATCC BAA-1091).